Consider the following 106-residue polypeptide: Small ribosomal subunit protein bS20 (106 aa).

Positions 1-32 (MAQKKPKRNLSALKRHRQSLKRRLRNKAKKSA) are disordered.

In terms of assembly, part of the 30S ribosomal subunit.

One of the primary rRNA binding proteins, it binds directly to 16S rRNA where it nucleates assembly of the bottom of the body of the 30S subunit, by binding to several RNA helices of the 16S rRNA. This chain is Small ribosomal subunit protein bS20 (rpsT), found in Thermus thermophilus (strain ATCC 27634 / DSM 579 / HB8).